Consider the following 356-residue polypeptide: Histidinol-phosphate aminotransferase 2 (356 aa).

K214 is subject to N6-(pyridoxal phosphate)lysine.

The protein belongs to the class-II pyridoxal-phosphate-dependent aminotransferase family. Histidinol-phosphate aminotransferase subfamily. Homodimer. Pyridoxal 5'-phosphate serves as cofactor.

The catalysed reaction is L-histidinol phosphate + 2-oxoglutarate = 3-(imidazol-4-yl)-2-oxopropyl phosphate + L-glutamate. Its pathway is amino-acid biosynthesis; L-histidine biosynthesis; L-histidine from 5-phospho-alpha-D-ribose 1-diphosphate: step 7/9. The sequence is that of Histidinol-phosphate aminotransferase 2 from Dechloromonas aromatica (strain RCB).